Reading from the N-terminus, the 861-residue chain is Ataxin-7-like protein 1 (861 aa).

Disordered regions lie at residues 1–31, 154–189, 342–448, 606–673, and 772–861; these read MTSE…AMAT, GHHS…KGSR, KSRE…GADE, PIPA…LSGP, and FDKS…RTLP. The SCA7 domain occupies 284 to 351; it reads RRLSEREFDP…KSREKEVKDK (68 aa). The span at 342–354 shows a compositional bias: basic and acidic residues; sequence KSREKEVKDKEHL. A compositionally biased stretch (polar residues) spans 355–369; sequence LTSTREILPSQSGPA. 3 stretches are compositionally biased toward low complexity: residues 372 to 381, 403 to 417, and 606 to 616; these read SLLGSSGSSG, SSAN…SNHS, and PIPAVIPSPSH. Residues 617 to 627 are compositionally biased toward basic residues; the sequence is KPSKTKTSKSS. A compositionally biased stretch (basic and acidic residues) spans 628 to 641; that stretch reads KVKDLSTRSDESPS. Low complexity-rich tracts occupy residues 648 to 671 and 783 to 794; these read QSST…SPLS and SSSSSKACKITK. Residues 817–828 show a composition bias toward polar residues; sequence VNSTSSRQVGKN. The span at 829 to 847 shows a compositional bias: low complexity; that stretch reads SSLALSQSSPSSISSPGHS.

The polypeptide is Ataxin-7-like protein 1 (ATXN7L1) (Homo sapiens (Human)).